Here is a 350-residue protein sequence, read N- to C-terminus: Protein RecA (350 aa).

68–75 contributes to the ATP binding site; the sequence is GPESSGKT.

This sequence belongs to the RecA family.

The protein localises to the cytoplasm. In terms of biological role, can catalyze the hydrolysis of ATP in the presence of single-stranded DNA, the ATP-dependent uptake of single-stranded DNA by duplex DNA, and the ATP-dependent hybridization of homologous single-stranded DNAs. It interacts with LexA causing its activation and leading to its autocatalytic cleavage. The sequence is that of Protein RecA from Mycolicibacterium vanbaalenii (strain DSM 7251 / JCM 13017 / BCRC 16820 / KCTC 9966 / NRRL B-24157 / PYR-1) (Mycobacterium vanbaalenii).